The sequence spans 102 residues: Large ribosomal subunit protein mL63 (102 aa).

The protein belongs to the mitochondrion-specific ribosomal protein mL63 family.

Its subcellular location is the mitochondrion. This is Large ribosomal subunit protein mL63 (Mrpl57) from Mus musculus (Mouse).